Here is a 302-residue protein sequence, read N- to C-terminus: Oxaloacetate decarboxylase 2 (302 aa).

Serine 50 contributes to the substrate binding site. Aspartate 88 contacts Mg(2+). Positions 159 and 235 each coordinate substrate.

This sequence belongs to the isocitrate lyase/PEP mutase superfamily. Oxaloacetate decarboxylase family. As to quaternary structure, homotetramer; dimer of dimers. Mg(2+) serves as cofactor.

The enzyme catalyses oxaloacetate + H(+) = pyruvate + CO2. Functionally, catalyzes the decarboxylation of oxaloacetate into pyruvate. Seems to play a role in maintaining cellular concentrations of bicarbonate and pyruvate. This chain is Oxaloacetate decarboxylase 2, found in Pseudomonas putida (strain W619).